A 245-amino-acid chain; its full sequence is 5-oxoprolinase subunit A (245 aa).

Belongs to the LamB/PxpA family. In terms of assembly, forms a complex composed of PxpA, PxpB and PxpC.

The enzyme catalyses 5-oxo-L-proline + ATP + 2 H2O = L-glutamate + ADP + phosphate + H(+). Catalyzes the cleavage of 5-oxoproline to form L-glutamate coupled to the hydrolysis of ATP to ADP and inorganic phosphate. This chain is 5-oxoprolinase subunit A, found in Haemophilus influenzae (strain PittGG).